Consider the following 161-residue polypeptide: Allophycocyanin beta chain (161 aa).

N4-methylasparagine is present on asparagine 71. Cysteine 81 contributes to the (2R,3E)-phycocyanobilin binding site.

This sequence belongs to the phycobiliprotein family. As to quaternary structure, heterodimer of an alpha and a beta chain. Contains one covalently linked phycocyanobilin chromophore.

Its subcellular location is the plastid. The protein localises to the chloroplast thylakoid membrane. In terms of biological role, light-harvesting photosynthetic bile pigment-protein from the phycobiliprotein complex. Allophycocyanin has a maximum absorption at approximately 650 nanometers. The sequence is that of Allophycocyanin beta chain (apcB) from Cyanidium caldarium (Red alga).